We begin with the raw amino-acid sequence, 196 residues long: NADH dehydrogenase [ubiquinone] 1 alpha subcomplex assembly factor 3 (196 aa).

Residues M1–S93 constitute a mitochondrion transit peptide.

The protein belongs to the NDUFAF3 family. Together with NdufAF4 associates with mitochondrial complex I assembly intermediates during its biogenesis.

It is found in the mitochondrion. Involved in the assembly of mitochondrial NADH:ubiquinone oxidoreductase complex (complex I). Together with NdufAF4, involved in biogenesis of complex 1 modules N, Q and P-peripheral, but not the P-distal module. Required for recruitment of the complex I assembly factor Timmdc1 to complex 1 assembly intermediates. The polypeptide is NADH dehydrogenase [ubiquinone] 1 alpha subcomplex assembly factor 3 (Drosophila melanogaster (Fruit fly)).